Reading from the N-terminus, the 481-residue chain is Alpha-L-arabinofuranosidase 43 (481 aa).

Residues 1-19 (MRFSVFTAAIAAAFSACCA) form the signal peptide. Asn158, Asn176, and Asn365 each carry an N-linked (GlcNAc...) asparagine glycan.

The protein belongs to the glycosyl hydrolase 43 family.

It is found in the secreted. It catalyses the reaction Hydrolysis of terminal non-reducing alpha-L-arabinofuranoside residues in alpha-L-arabinosides.. Its activity is regulated as follows. Activity is significantly inhibited by SDS and partially inhibited by Ag(+), Fe(3+) and beta-mercaptoethanol. Functionally, alpha-L-arabinofuranosidase specific for the cleavage of alpha-1,3-linkage. Shows high activity against 4-nitrophenyl alpha-L-arabinofuranoside, debranched arabinan, and sugar beet arabinan. The protein is Alpha-L-arabinofuranosidase 43 of Humicola insolens (Soft-rot fungus).